The primary structure comprises 202 residues: Thymidylate kinase (202 aa).

7–14 (GIDGSGKT) contributes to the ATP binding site.

The protein belongs to the thymidylate kinase family.

It catalyses the reaction dTMP + ATP = dTDP + ADP. In terms of biological role, phosphorylation of dTMP to form dTDP in both de novo and salvage pathways of dTTP synthesis. The polypeptide is Thymidylate kinase (Ehrlichia canis (strain Jake)).